A 227-amino-acid chain; its full sequence is Cytochrome c oxidase subunit 2 (227 aa).

Residues 1 to 14 (MPYPLQLGLQDATS) lie on the Mitochondrial intermembrane side of the membrane. Residues 15–45 (PIMEELTHFHDHTLMIVFLISSLVLYIISSM) traverse the membrane as a helical segment. Residues 46–59 (LTTKLTHTSTMDAQ) are Mitochondrial matrix-facing. A helical membrane pass occupies residues 60–87 (EVETIWTILPAMILILIALPSLRILYMM). The Mitochondrial intermembrane portion of the chain corresponds to 88-227 (DEINDPSLTV…YFEDWSASLL (140 aa)). Histidine 161, cysteine 196, glutamate 198, cysteine 200, histidine 204, and methionine 207 together coordinate Cu cation. Glutamate 198 provides a ligand contact to Mg(2+).

This sequence belongs to the cytochrome c oxidase subunit 2 family. As to quaternary structure, component of the cytochrome c oxidase (complex IV, CIV), a multisubunit enzyme composed of 14 subunits. The complex is composed of a catalytic core of 3 subunits MT-CO1, MT-CO2 and MT-CO3, encoded in the mitochondrial DNA, and 11 supernumerary subunits COX4I, COX5A, COX5B, COX6A, COX6B, COX6C, COX7A, COX7B, COX7C, COX8 and NDUFA4, which are encoded in the nuclear genome. The complex exists as a monomer or a dimer and forms supercomplexes (SCs) in the inner mitochondrial membrane with NADH-ubiquinone oxidoreductase (complex I, CI) and ubiquinol-cytochrome c oxidoreductase (cytochrome b-c1 complex, complex III, CIII), resulting in different assemblies (supercomplex SCI(1)III(2)IV(1) and megacomplex MCI(2)III(2)IV(2)). Found in a complex with TMEM177, COA6, COX18, COX20, SCO1 and SCO2. Interacts with TMEM177 in a COX20-dependent manner. Interacts with COX20. Interacts with COX16. Cu cation is required as a cofactor.

The protein resides in the mitochondrion inner membrane. It catalyses the reaction 4 Fe(II)-[cytochrome c] + O2 + 8 H(+)(in) = 4 Fe(III)-[cytochrome c] + 2 H2O + 4 H(+)(out). Functionally, component of the cytochrome c oxidase, the last enzyme in the mitochondrial electron transport chain which drives oxidative phosphorylation. The respiratory chain contains 3 multisubunit complexes succinate dehydrogenase (complex II, CII), ubiquinol-cytochrome c oxidoreductase (cytochrome b-c1 complex, complex III, CIII) and cytochrome c oxidase (complex IV, CIV), that cooperate to transfer electrons derived from NADH and succinate to molecular oxygen, creating an electrochemical gradient over the inner membrane that drives transmembrane transport and the ATP synthase. Cytochrome c oxidase is the component of the respiratory chain that catalyzes the reduction of oxygen to water. Electrons originating from reduced cytochrome c in the intermembrane space (IMS) are transferred via the dinuclear copper A center (CU(A)) of subunit 2 and heme A of subunit 1 to the active site in subunit 1, a binuclear center (BNC) formed by heme A3 and copper B (CU(B)). The BNC reduces molecular oxygen to 2 water molecules using 4 electrons from cytochrome c in the IMS and 4 protons from the mitochondrial matrix. The sequence is that of Cytochrome c oxidase subunit 2 (MT-CO2) from Dugong dugon (Dugong).